The chain runs to 274 residues: Homeobox-leucine zipper protein HAT9 (274 aa).

The segment covering 64–74 has biased composition (low complexity); it reads SSHSGVSSFSS. Positions 64 to 96 are disordered; that stretch reads SSHSGVSSFSSGRVVKRERDGGEESPEEEEMTE. Positions 110 to 169 form a DNA-binding region, homeobox; that stretch reads SARKKLRLTKQQSALLEESFKDHSTLNPKQKQVLARQLNLRPRQVEVWFQNRRARTKLKQ. Residues 177 to 198 form a leucine-zipper region; sequence LKKCCETLADENIRLQKEIQEL.

This sequence belongs to the HD-ZIP homeobox family. Class II subfamily.

Its subcellular location is the nucleus. Functionally, probable transcription factor. The polypeptide is Homeobox-leucine zipper protein HAT9 (HAT9) (Arabidopsis thaliana (Mouse-ear cress)).